Consider the following 478-residue polypeptide: Siroheme synthase (478 aa).

The tract at residues 1 to 207 (MTANVLFPLF…QRHAEAEAVL (207 aa)) is precorrin-2 dehydrogenase /sirohydrochlorin ferrochelatase. NAD(+) contacts are provided by residues 25 to 26 (KV) and 46 to 47 (PS). S132 carries the post-translational modification Phosphoserine. A uroporphyrinogen-III C-methyltransferase region spans residues 220-478 (GSVTLVGAGA…PCPPRTHPIS (259 aa)). Catalysis depends on D252, which acts as the Proton acceptor. K274 serves as the catalytic Proton donor. Residues 305-307 (GGD), V310, 335-336 (TA), M387, and G416 each bind S-adenosyl-L-methionine.

This sequence in the N-terminal section; belongs to the precorrin-2 dehydrogenase / sirohydrochlorin ferrochelatase family. The protein in the C-terminal section; belongs to the precorrin methyltransferase family.

The enzyme catalyses uroporphyrinogen III + 2 S-adenosyl-L-methionine = precorrin-2 + 2 S-adenosyl-L-homocysteine + H(+). It catalyses the reaction precorrin-2 + NAD(+) = sirohydrochlorin + NADH + 2 H(+). The catalysed reaction is siroheme + 2 H(+) = sirohydrochlorin + Fe(2+). The protein operates within cofactor biosynthesis; adenosylcobalamin biosynthesis; precorrin-2 from uroporphyrinogen III: step 1/1. It functions in the pathway cofactor biosynthesis; adenosylcobalamin biosynthesis; sirohydrochlorin from precorrin-2: step 1/1. Its pathway is porphyrin-containing compound metabolism; siroheme biosynthesis; precorrin-2 from uroporphyrinogen III: step 1/1. It participates in porphyrin-containing compound metabolism; siroheme biosynthesis; siroheme from sirohydrochlorin: step 1/1. The protein operates within porphyrin-containing compound metabolism; siroheme biosynthesis; sirohydrochlorin from precorrin-2: step 1/1. In terms of biological role, multifunctional enzyme that catalyzes the SAM-dependent methylations of uroporphyrinogen III at position C-2 and C-7 to form precorrin-2 via precorrin-1. Then it catalyzes the NAD-dependent ring dehydrogenation of precorrin-2 to yield sirohydrochlorin. Finally, it catalyzes the ferrochelation of sirohydrochlorin to yield siroheme. The chain is Siroheme synthase from Xylella fastidiosa (strain M23).